The sequence spans 351 residues: Photosystem II D2 protein (351 aa).

The helical transmembrane segment at 39-59 threads the bilayer; sequence CAFLALGGWLTGTTFVTSWYT. Residue His-116 participates in chlorophyll a binding. Residues 123–139 form a helical membrane-spanning segment; it reads GFMLRQFEIARLVGIRP. 2 residues coordinate pheophytin a: Gln-128 and Asn-141. The helical transmembrane segment at 151-164 threads the bilayer; it reads VFVSVFLMYPLGQS. Chlorophyll a is bound at residue His-196. Residues 206 to 226 form a helical membrane-spanning segment; that stretch reads GALLCAIHGATVENTLFEDGE. His-213 and Phe-260 together coordinate a plastoquinone. Position 213 (His-213) interacts with Fe cation. A Fe cation-binding site is contributed by His-267. The chain crosses the membrane as a helical span at residues 277–293; sequence GLWMSAVGIVGLALNLR.

It belongs to the reaction center PufL/M/PsbA/D family. As to quaternary structure, PSII is composed of 1 copy each of membrane proteins PsbA, PsbB, PsbC, PsbD, PsbE, PsbF, PsbH, PsbI, PsbJ, PsbK, PsbL, PsbM, PsbT, PsbX, PsbY, PsbZ, Psb30/Ycf12, peripheral proteins PsbO, CyanoQ (PsbQ), PsbU, PsbV and a large number of cofactors. It forms dimeric complexes. The D1/D2 heterodimer binds P680, chlorophylls that are the primary electron donor of PSII, and subsequent electron acceptors. It shares a non-heme iron and each subunit binds pheophytin, quinone, additional chlorophylls, carotenoids and lipids. There is also a Cl(-1) ion associated with D1 and D2, which is required for oxygen evolution. The PSII complex binds additional chlorophylls, carotenoids and specific lipids. serves as cofactor.

The protein resides in the cellular thylakoid membrane. The catalysed reaction is 2 a plastoquinone + 4 hnu + 2 H2O = 2 a plastoquinol + O2. Photosystem II (PSII) is a light-driven water:plastoquinone oxidoreductase that uses light energy to abstract electrons from H(2)O, generating O(2) and a proton gradient subsequently used for ATP formation. It consists of a core antenna complex that captures photons, and an electron transfer chain that converts photonic excitation into a charge separation. The D1/D2 (PsbA/PsbD) reaction center heterodimer binds P680, the primary electron donor of PSII as well as several subsequent electron acceptors. D2 is needed for assembly of a stable PSII complex. The polypeptide is Photosystem II D2 protein (Nostoc sp. (strain PCC 7120 / SAG 25.82 / UTEX 2576)).